The following is a 399-amino-acid chain: 3-sulfinopropanoyl-CoA desulfinase (399 aa).

FAD-binding positions include 121–124, serine 130, and 153–156; these read ICIS and YWIT. Position 244 to 245 (244 to 245) interacts with substrate; that stretch reads YN. FAD-binding positions include arginine 273, glutamine 340, serine 344, 367–371, and glutamine 388; that span reads GGTAQ.

Belongs to the acyl-CoA dehydrogenase family. In terms of assembly, homotrimer or homotetramer. FAD is required as a cofactor.

It carries out the reaction 3-sulfinopropanoyl-CoA + H2O = propanoyl-CoA + sulfite + H(+). Catalyzes the conversion 3-sulfinopropanoyl-CoA (3SP-CoA) to propanoyl-CoA by abstraction of sulfite. Does not show dehydrogenase activity. This is 3-sulfinopropanoyl-CoA desulfinase from Variovorax paradoxus.